The primary structure comprises 196 residues: Translation machinery-associated protein 22 (196 aa).

The SUI1 domain occupies 97 to 168; the sequence is VIVKREARTK…EVVAYIHSLL (72 aa).

This sequence belongs to the DENR family. As to quaternary structure, interacts with the 40S ribosomal subunit.

The protein localises to the cytoplasm. The polypeptide is Translation machinery-associated protein 22 (TMA22) (Candida glabrata (strain ATCC 2001 / BCRC 20586 / JCM 3761 / NBRC 0622 / NRRL Y-65 / CBS 138) (Yeast)).